The chain runs to 396 residues: Anticodon nuclease (396 aa).

Functionally, anticodon endonuclease (ACNase) that triggers the cleavage ligation of tRNA(Lys). It is activated by T4 stp protein and masked by the prrD protein (the endonuclease subunit of EcoprrI). The prr locus restricts phage T4 mutants lacking polynucleotide kinase or RNA ligase; T4 mutants lacking these genes manifest a T4-induced anticodon nuclease (ACNase). It is thought that Stp and other T4-encoded ACNase factors counteract the masking agents, thus activating the latent ACNase. The sequence is that of Anticodon nuclease from Escherichia coli.